Reading from the N-terminus, the 151-residue chain is Histone H2A.2.2 (151 aa).

Met1 carries the post-translational modification N-acetylmethionine. The interval 129 to 151 (EKAEKAGTKAKSPKKATKSPKKA) is disordered. The span at 139–151 (KSPKKATKSPKKA) shows a compositional bias: basic residues. 2 consecutive short sequence motifs (SPKK motif) follow at residues 140–143 (SPKK) and 147–150 (SPKK).

The protein belongs to the histone H2A family. In terms of assembly, the nucleosome is a histone octamer containing two molecules each of H2A, H2B, H3 and H4 assembled in one H3-H4 heterotetramer and two H2A-H2B heterodimers. The octamer wraps approximately 147 bp of DNA. Phosphorylated within its C-terminal part, probably at the SPKK motifs.

The protein resides in the nucleus. Its subcellular location is the chromosome. Core component of nucleosome. Nucleosomes wrap and compact DNA into chromatin, limiting DNA accessibility to the cellular machineries which require DNA as a template. Histones thereby play a central role in transcription regulation, DNA repair, DNA replication and chromosomal stability. DNA accessibility is regulated via a complex set of post-translational modifications of histones, also called histone code, and nucleosome remodeling. The chain is Histone H2A.2.2 from Triticum aestivum (Wheat).